A 215-amino-acid polypeptide reads, in one-letter code: Phosphatidylserine decarboxylase proenzyme (215 aa).

Ser-186 (schiff-base intermediate with substrate; via pyruvic acid) is an active-site residue. Ser-186 is subject to Pyruvic acid (Ser); by autocatalysis.

The protein belongs to the phosphatidylserine decarboxylase family. PSD-A subfamily. Heterodimer of a large membrane-associated beta subunit and a small pyruvoyl-containing alpha subunit. Pyruvate serves as cofactor. Post-translationally, is synthesized initially as an inactive proenzyme. Formation of the active enzyme involves a self-maturation process in which the active site pyruvoyl group is generated from an internal serine residue via an autocatalytic post-translational modification. Two non-identical subunits are generated from the proenzyme in this reaction, and the pyruvate is formed at the N-terminus of the alpha chain, which is derived from the carboxyl end of the proenzyme. The post-translation cleavage follows an unusual pathway, termed non-hydrolytic serinolysis, in which the side chain hydroxyl group of the serine supplies its oxygen atom to form the C-terminus of the beta chain, while the remainder of the serine residue undergoes an oxidative deamination to produce ammonia and the pyruvoyl prosthetic group on the alpha chain.

It localises to the cell membrane. It catalyses the reaction a 1,2-diacyl-sn-glycero-3-phospho-L-serine + H(+) = a 1,2-diacyl-sn-glycero-3-phosphoethanolamine + CO2. Its pathway is phospholipid metabolism; phosphatidylethanolamine biosynthesis; phosphatidylethanolamine from CDP-diacylglycerol: step 2/2. Functionally, catalyzes the formation of phosphatidylethanolamine (PtdEtn) from phosphatidylserine (PtdSer). This is Phosphatidylserine decarboxylase proenzyme from Pelagibacter ubique (strain HTCC1062).